Consider the following 119-residue polypeptide: Large ribosomal subunit protein uL18 (119 aa).

This sequence belongs to the universal ribosomal protein uL18 family. Part of the 50S ribosomal subunit; part of the 5S rRNA/L5/L18/L25 subcomplex. Contacts the 5S and 23S rRNAs.

This is one of the proteins that bind and probably mediate the attachment of the 5S RNA into the large ribosomal subunit, where it forms part of the central protuberance. The sequence is that of Large ribosomal subunit protein uL18 from Xanthomonas oryzae pv. oryzae (strain PXO99A).